The primary structure comprises 497 residues: Galactose-1-phosphate uridylyltransferase (497 aa).

It belongs to the galactose-1-phosphate uridylyltransferase type 2 family.

It is found in the cytoplasm. It carries out the reaction alpha-D-galactose 1-phosphate + UDP-alpha-D-glucose = alpha-D-glucose 1-phosphate + UDP-alpha-D-galactose. Its pathway is carbohydrate metabolism; galactose metabolism. This chain is Galactose-1-phosphate uridylyltransferase, found in Enterococcus faecalis (strain ATCC 700802 / V583).